We begin with the raw amino-acid sequence, 219 residues long: Large ribosomal subunit protein mL67 (219 aa).

The protein belongs to the mitochondrion-specific ribosomal protein mL67 family.

It is found in the nucleus. The protein localises to the mitochondrion. Transcription factor involved in regulation of RNA polymerase II-dependent transcription. Also involved in regulation of mitochondrial DNA recombination, maintenance and repair, and generation of homoplasmic cells. The polypeptide is Large ribosomal subunit protein mL67 (MHR1) (Kluyveromyces lactis (strain ATCC 8585 / CBS 2359 / DSM 70799 / NBRC 1267 / NRRL Y-1140 / WM37) (Yeast)).